The primary structure comprises 529 residues: Biotin-dependent 3-methylcrotonyl-coenzyme A carboxylase beta1 subunit (529 aa).

In terms of domain architecture, CoA carboxyltransferase N-terminal spans 16–272; it reads HRRLVAELNN…CEPAQWDVRR (257 aa). Residues 275–521 enclose the CoA carboxyltransferase C-terminal domain; sequence EPKYPQAELY…SLCAHAPLDQ (247 aa).

The protein belongs to the AccD/PCCB family. As to quaternary structure, the biotin-dependent acyl-CoA carboxylase complex is composed of AccA1, which contains the biotin carboxylase (BC) and biotin carboxyl carrier protein (BCCP) domains, and AccD1, which contains the carboxyl transferase (CT) domain. The AccA1/AccD1 complex forms a dodecamer.

It carries out the reaction 3-methylbut-2-enoyl-CoA + N(6)-carboxybiotinyl-L-lysyl-[protein] = 3-methyl-(2E)-glutaconyl-CoA + N(6)-biotinyl-L-lysyl-[protein]. It participates in amino-acid degradation; L-leucine degradation. Component of a biotin-dependent acyl-CoA carboxylase complex. This subunit transfers the CO2 from carboxybiotin to the CoA ester substrate. When associated with the alpha1 subunit AccA1, is involved in branched amino-acid catabolism with methylcrotonyl coenzyme A as the substrate. Shows residual with propionyl-CoA and acetyl-CoA. In Mycobacterium tuberculosis (strain ATCC 25618 / H37Rv), this protein is Biotin-dependent 3-methylcrotonyl-coenzyme A carboxylase beta1 subunit.